The sequence spans 293 residues: 1D-myo-inositol 2-acetamido-2-deoxy-alpha-D-glucopyranoside deacetylase 2 (293 aa).

Positions 6, 9, and 142 each coordinate Zn(2+).

Belongs to the MshB deacetylase family. Zn(2+) is required as a cofactor.

The enzyme catalyses 1D-myo-inositol 2-acetamido-2-deoxy-alpha-D-glucopyranoside + H2O = 1D-myo-inositol 2-amino-2-deoxy-alpha-D-glucopyranoside + acetate. Functionally, catalyzes the deacetylation of 1D-myo-inositol 2-acetamido-2-deoxy-alpha-D-glucopyranoside (GlcNAc-Ins) in the mycothiol biosynthesis pathway. This Frankia alni (strain DSM 45986 / CECT 9034 / ACN14a) protein is 1D-myo-inositol 2-acetamido-2-deoxy-alpha-D-glucopyranoside deacetylase 2.